We begin with the raw amino-acid sequence, 394 residues long: Phosphopentomutase (394 aa).

Mn(2+) contacts are provided by Asp13, Asp286, His291, Asp327, His328, and His339.

The protein belongs to the phosphopentomutase family. Mn(2+) is required as a cofactor.

Its subcellular location is the cytoplasm. It carries out the reaction 2-deoxy-alpha-D-ribose 1-phosphate = 2-deoxy-D-ribose 5-phosphate. It catalyses the reaction alpha-D-ribose 1-phosphate = D-ribose 5-phosphate. It participates in carbohydrate degradation; 2-deoxy-D-ribose 1-phosphate degradation; D-glyceraldehyde 3-phosphate and acetaldehyde from 2-deoxy-alpha-D-ribose 1-phosphate: step 1/2. Its function is as follows. Isomerase that catalyzes the conversion of deoxy-ribose 1-phosphate (dRib-1-P) and ribose 1-phosphate (Rib-1-P) to deoxy-ribose 5-phosphate (dRib-5-P) and ribose 5-phosphate (Rib-5-P), respectively. The chain is Phosphopentomutase from Bacillus cereus (strain ATCC 10987 / NRS 248).